The chain runs to 68 residues: Large ribosomal subunit protein uL29 (68 aa).

Belongs to the universal ribosomal protein uL29 family.

This is Large ribosomal subunit protein uL29 from Nitrobacter hamburgensis (strain DSM 10229 / NCIMB 13809 / X14).